The sequence spans 128 residues: Small ribosomal subunit protein uS11 (128 aa).

It belongs to the universal ribosomal protein uS11 family. In terms of assembly, part of the 30S ribosomal subunit. Interacts with proteins S7 and S18. Binds to IF-3.

Located on the platform of the 30S subunit, it bridges several disparate RNA helices of the 16S rRNA. Forms part of the Shine-Dalgarno cleft in the 70S ribosome. This Wolbachia sp. subsp. Drosophila simulans (strain wRi) protein is Small ribosomal subunit protein uS11.